The sequence spans 882 residues: Translation initiation factor IF-2 (882 aa).

3 stretches are compositionally biased toward polar residues: residues 38 to 56, 97 to 124, and 140 to 192; these read NDSN…AEYS, GGYS…YSQN, and GGYS…NRDS. Disordered stretches follow at residues 38–192 and 236–274; these read NDSN…NRDS and STPA…AETE. Basic and acidic residues predominate over residues 243-259; sequence ENSKELNRKLGEKKKQQ. The tr-type G domain occupies 380-553; it reads EKPPVITIMG…DMMLLKANPS (174 aa). Residues 389 to 396 are G1; it reads GHVDHGKT. Residue 389–396 coordinates GTP; sequence GHVDHGKT. The G2 stretch occupies residues 414–418; that stretch reads GITQH. The G3 stretch occupies residues 435 to 438; the sequence is DTPG. Residues 435–439 and 489–492 contribute to the GTP site; these read DTPGH and NKID. The segment at 489–492 is G4; that stretch reads NKID. The interval 525 to 527 is G5; the sequence is SAL.

It belongs to the TRAFAC class translation factor GTPase superfamily. Classic translation factor GTPase family. IF-2 subfamily.

It is found in the cytoplasm. Functionally, one of the essential components for the initiation of protein synthesis. Protects formylmethionyl-tRNA from spontaneous hydrolysis and promotes its binding to the 30S ribosomal subunits. Also involved in the hydrolysis of GTP during the formation of the 70S ribosomal complex. This is Translation initiation factor IF-2 (infB) from Borreliella burgdorferi (strain ATCC 35210 / DSM 4680 / CIP 102532 / B31) (Borrelia burgdorferi).